The chain runs to 68 residues: Large ribosomal subunit protein uL29 (68 aa).

Belongs to the universal ribosomal protein uL29 family.

The sequence is that of Large ribosomal subunit protein uL29 from Rhodopseudomonas palustris (strain BisB18).